The following is a 474-amino-acid chain: Stabilizer of axonemal microtubules 1 (474 aa).

12 mn regions span residues 30-64, 65-97, 98-131, 132-165, 166-199, 200-232, 233-266, 267-299, 300-332, 333-366, 367-400, and 401-434; these read KPCLLSEYTENYPCYHSYLPRESFKPRREYQKGSI, PMEGLTTSRRDFGPHKVAPVKAHQYDQFVPSEE, NMDLLTTYKKDYNPYTVCRVDPIKPRDSKYPYSN, KMEYLPTYKADYLPWNQPRRQPLRLEHKYQPASV, RFDNRTTHQDDYPIKGLVKTVSCKPLAMPKLCNI, PLEDVTNYKMSYVAHPVEKRFVHEAEKFRPCEI, PFESLTTHKQSYRGLMGEPAKSLKPLARPPGLDM, PFSNTTEFRDKYQAWPTPQMFSKAPITYVPPED, SMDLLTTVQAHYTYPKGVPARSCRPAPQIRKSG, RFEGSSTTKDDYKQWSSMRTEPVKPIPQLDFPTE, PLDCLTTTRAHYVPHPPINTKSCKPHWSGPRGNV, and PVEGQTTYTISFTPKEMSKCLASYPEPPGYTFEE. The tract at residues 318–350 is disordered; that stretch reads PARSCRPAPQIRKSGRFEGSSTTKDDYKQWSSM. The segment at 444–474 is disordered; that stretch reads KPVSQAGSQQSSHLSVDDSENPSQRKLEVSA. Residues 448–457 are compositionally biased toward polar residues; sequence QAGSQQSSHL.

This sequence belongs to the FAM154 family. As to quaternary structure, associates with microtubules via the Mn regions.

The protein resides in the cytoplasm. It localises to the cytoskeleton. The protein localises to the microtubule organizing center. It is found in the centrosome. Its subcellular location is the centriole. The protein resides in the cilium basal body. It localises to the cilium axoneme. The protein localises to the flagellum axoneme. Functionally, may play a role in the regulation of cilium length. Stabilizes microtubules at low temperature. This chain is Stabilizer of axonemal microtubules 1 (SAXO1), found in Macaca fascicularis (Crab-eating macaque).